We begin with the raw amino-acid sequence, 358 residues long: Phenylalanine--tRNA ligase alpha subunit (358 aa).

Mg(2+) is bound at residue Glu-258.

This sequence belongs to the class-II aminoacyl-tRNA synthetase family. Phe-tRNA synthetase alpha subunit type 1 subfamily. In terms of assembly, tetramer of two alpha and two beta subunits. Requires Mg(2+) as cofactor.

It is found in the cytoplasm. The enzyme catalyses tRNA(Phe) + L-phenylalanine + ATP = L-phenylalanyl-tRNA(Phe) + AMP + diphosphate + H(+). The sequence is that of Phenylalanine--tRNA ligase alpha subunit from Rhodospirillum rubrum (strain ATCC 11170 / ATH 1.1.1 / DSM 467 / LMG 4362 / NCIMB 8255 / S1).